Consider the following 194-residue polypeptide: CASP-like protein 1D1 (194 aa).

Basic and acidic residues predominate over residues 1–16 (MGSDETKSTLDTERST). The tract at residues 1 to 23 (MGSDETKSTLDTERSTVPRTGTT) is disordered. Over 1–31 (MGSDETKSTLDTERSTVPRTGTTTKSCSITQ) the chain is Cytoplasmic. Residues 32 to 52 (VVLRFVLFAATLTSIVVMVTS) traverse the membrane as a helical segment. Residues 53–77 (KQTKNIFIPGTPIRIPAAKFTNSPA) are Extracellular-facing. A helical transmembrane segment spans residues 78–98 (LIYFVVALSVACFYSIVSTFV). Topologically, residues 99 to 109 (TVSAFKKHSCS) are cytoplasmic. Residues 110–130 (AILLLNLAIMDAVMVGIVASA) traverse the membrane as a helical segment. Over 131–163 (TGAGGGVAYLGLKGNKEVRWGKICNIYDKFCRH) the chain is Extracellular. Residues 164 to 184 (VGGAIAVSLFASVILLLLSII) traverse the membrane as a helical segment. Topologically, residues 185-194 (SVLSLYKKIR) are cytoplasmic.

This sequence belongs to the Casparian strip membrane proteins (CASP) family. As to quaternary structure, homodimer and heterodimers.

It localises to the cell membrane. This is CASP-like protein 1D1 from Arabidopsis lyrata subsp. lyrata (Lyre-leaved rock-cress).